Consider the following 298-residue polypeptide: Protoheme IX farnesyltransferase (298 aa).

A run of 9 helical transmembrane segments spans residues 28–48 (VVAL…EELV), 50–70 (LKVL…AAAI), 95–117 (LSPA…TLYA), 121–138 (PLTA…AVVY), 149–169 (NIVI…TSVT), 176–196 (AVLL…ALAV), 222–242 (CIFL…LIGM), 243–263 (TGMI…AYAW), and 274–294 (AFNM…ILLV).

This sequence belongs to the UbiA prenyltransferase family. Protoheme IX farnesyltransferase subfamily.

It is found in the cell inner membrane. The catalysed reaction is heme b + (2E,6E)-farnesyl diphosphate + H2O = Fe(II)-heme o + diphosphate. It functions in the pathway porphyrin-containing compound metabolism; heme O biosynthesis; heme O from protoheme: step 1/1. In terms of biological role, converts heme B (protoheme IX) to heme O by substitution of the vinyl group on carbon 2 of heme B porphyrin ring with a hydroxyethyl farnesyl side group. The sequence is that of Protoheme IX farnesyltransferase from Idiomarina loihiensis (strain ATCC BAA-735 / DSM 15497 / L2-TR).